A 99-amino-acid chain; its full sequence is Large ribosomal subunit protein uL23 (99 aa).

It belongs to the universal ribosomal protein uL23 family. In terms of assembly, part of the 50S ribosomal subunit. Contacts protein L29, and trigger factor when it is bound to the ribosome.

In terms of biological role, one of the early assembly proteins it binds 23S rRNA. One of the proteins that surrounds the polypeptide exit tunnel on the outside of the ribosome. Forms the main docking site for trigger factor binding to the ribosome. This chain is Large ribosomal subunit protein uL23, found in Ectopseudomonas mendocina (strain ymp) (Pseudomonas mendocina).